A 142-amino-acid polypeptide reads, in one-letter code: U1 small nuclear ribonucleoprotein C (142 aa).

Residues 4–36 (YYCDYCDTFLTHDSPSVRKTHNGGRKHKDNVRM) form a Matrin-type zinc finger.

It belongs to the U1 small nuclear ribonucleoprotein C family. U1 snRNP is composed of the 7 core Sm proteins B/B', D1, D2, D3, E, F and G that assemble in a heptameric protein ring on the Sm site of the small nuclear RNA to form the core snRNP, and at least 3 U1 snRNP-specific proteins U1-70K, U1-A and U1-C. U1-C interacts with U1 snRNA and the 5' splice-site region of the pre-mRNA.

It localises to the nucleus. Component of the spliceosomal U1 snRNP, which is essential for recognition of the pre-mRNA 5' splice-site and the subsequent assembly of the spliceosome. U1-C is directly involved in initial 5' splice-site recognition for both constitutive and regulated alternative splicing. The interaction with the 5' splice-site seems to precede base-pairing between the pre-mRNA and the U1 snRNA. Stimulates commitment or early (E) complex formation by stabilizing the base pairing of the 5' end of the U1 snRNA and the 5' splice-site region. This Caenorhabditis elegans protein is U1 small nuclear ribonucleoprotein C.